We begin with the raw amino-acid sequence, 406 residues long: Acetylornithine aminotransferase (406 aa).

Pyridoxal 5'-phosphate contacts are provided by residues 108-109 and Phe141; that span reads GA. Arg144 is a N(2)-acetyl-L-ornithine binding site. A pyridoxal 5'-phosphate-binding site is contributed by 226–229; it reads DEVQ. Lys255 carries the N6-(pyridoxal phosphate)lysine modification. Thr283 contacts N(2)-acetyl-L-ornithine. Thr284 is a pyridoxal 5'-phosphate binding site.

This sequence belongs to the class-III pyridoxal-phosphate-dependent aminotransferase family. ArgD subfamily. As to quaternary structure, homodimer. It depends on pyridoxal 5'-phosphate as a cofactor.

The protein resides in the cytoplasm. It catalyses the reaction N(2)-acetyl-L-ornithine + 2-oxoglutarate = N-acetyl-L-glutamate 5-semialdehyde + L-glutamate. The protein operates within amino-acid biosynthesis; L-arginine biosynthesis; N(2)-acetyl-L-ornithine from L-glutamate: step 4/4. The chain is Acetylornithine aminotransferase from Pseudomonas putida (strain ATCC 47054 / DSM 6125 / CFBP 8728 / NCIMB 11950 / KT2440).